Here is a 456-residue protein sequence, read N- to C-terminus: Short chain dehydrogenase tazN (456 aa).

NADP(+)-binding residues include V45, D99, N126, R160, Y195, K199, and T229. Residue Y195 is the Proton donor of the active site. The active-site Lowers pKa of active site Tyr is the K199.

The protein belongs to the short-chain dehydrogenases/reductases (SDR) family.

It participates in secondary metabolite biosynthesis. Functionally, short chain dehydrogenase; part of the gene cluster that mediates the biosynthesis of azaterrilone A and other azaphilones, a class of fungal metabolites characterized by a highly oxygenated pyrano-quinone bicyclic core and exhibiting a broad range of bioactivities. The first step of the pathway begins with the non-reducing polyketide synthase tazA that assembles one acetyl-CoA starter unit, five malonyl-CoA units, and catalyzes a series of Claisen condensations, methylation, PT-mediated cyclization, and finally releases the first hexaketide precursor through the R-domain. The tazA product then undergoes reduction on its terminal ketone and the following pyran-ring formation by yet undetermined enzyme(s). Dehydration and enoyl reduction, possibly involving the trans-enoyl reductase tazE leads to the next intermediate. TazD is predicted as an acetyltransferase and might catalyze the acetylation steps leading to the synthesis of azaterrilone A. Azaterrilone A is not the final product of the taz pathway and both the highly reducing polyketide synthase tazB and the dual enzyme tazHJ catalyze late steps of the pathway, leading to the production of the 2 final stereoisomers that contain additional polyketide modification whose structures have still to be determined. The protein is Short chain dehydrogenase tazN of Aspergillus terreus (strain NIH 2624 / FGSC A1156).